Reading from the N-terminus, the 363-residue chain is 3-isopropylmalate dehydrogenase (363 aa).

Residue 78–91 participates in NAD(+) binding; sequence GPKWEHLPPDQQPE. Substrate contacts are provided by Arg-99, Arg-109, Arg-138, and Asp-227. Mg(2+) contacts are provided by Asp-227, Asp-251, and Asp-255. Residue 285–297 coordinates NAD(+); that stretch reads GSAPDITGKNIAN.

Belongs to the isocitrate and isopropylmalate dehydrogenases family. LeuB type 1 subfamily. As to quaternary structure, homodimer. The cofactor is Mg(2+). Mn(2+) serves as cofactor.

It is found in the cytoplasm. It catalyses the reaction (2R,3S)-3-isopropylmalate + NAD(+) = 4-methyl-2-oxopentanoate + CO2 + NADH. It participates in amino-acid biosynthesis; L-leucine biosynthesis; L-leucine from 3-methyl-2-oxobutanoate: step 3/4. In terms of biological role, catalyzes the oxidation of 3-carboxy-2-hydroxy-4-methylpentanoate (3-isopropylmalate) to 3-carboxy-4-methyl-2-oxopentanoate. The product decarboxylates to 4-methyl-2 oxopentanoate. The polypeptide is 3-isopropylmalate dehydrogenase (Shigella boydii serotype 4 (strain Sb227)).